The chain runs to 385 residues: Circadian-associated transcriptional repressor (385 aa).

Over residues 1–26 the composition is skewed to low complexity; that stretch reads MDSPSSVSSYSSYSLSSSFPTSPVNS. Disordered stretches follow at residues 1 to 108, 203 to 233, and 365 to 385; these read MDSP…SLNT, GGGK…EKMD, and GHRE…LLNL. A compositionally biased stretch (basic and acidic residues) spans 33–45; it reads DSEREDKGAHGPR. Residues 70–79 show a composition bias toward polar residues; it reads VSGNQHTPSH.

In terms of assembly, interacts with PER2, CRY2, BHLHE41, HDAC1 and NR3C1. Interacts with BMAL1.

Its subcellular location is the nucleus. It is found in the PML body. Its function is as follows. Transcriptional repressor which forms a negative regulatory component of the circadian clock and acts independently of the circadian transcriptional repressors: CRY1, CRY2 and BHLHE41. In a histone deacetylase-dependent manner represses the transcriptional activator activity of the CLOCK-BMAL1 heterodimer. Abrogates the interaction of BMAL1 with the transcriptional coactivator CREBBP and can repress the histone acetyl-transferase activity of the CLOCK-BMAL1 heterodimer, reducing histone acetylation of its target genes. Rhythmically binds the E-box elements (5'-CACGTG-3') on circadian gene promoters and its occupancy shows circadian oscillation antiphasic to BMAL1. Interacts with the glucocorticoid receptor (NR3C1) and contributes to the repressive function in the glucocorticoid response. The protein is Circadian-associated transcriptional repressor (CIART) of Homo sapiens (Human).